Reading from the N-terminus, the 90-residue chain is Small ribosomal subunit protein uS17 (90 aa).

The protein belongs to the universal ribosomal protein uS17 family. As to quaternary structure, part of the 30S ribosomal subunit.

One of the primary rRNA binding proteins, it binds specifically to the 5'-end of 16S ribosomal RNA. This Burkholderia thailandensis (strain ATCC 700388 / DSM 13276 / CCUG 48851 / CIP 106301 / E264) protein is Small ribosomal subunit protein uS17.